A 453-amino-acid polypeptide reads, in one-letter code: Carbamoyl phosphate synthase arginine-specific small chain (453 aa).

Residues 1 to 28 (MFARVFKAMPARAPAFTSVNASIQSRFM) constitute a mitochondrion transit peptide. The region spanning 219-406 (HVAVIDCGVK…LDSVVKYKNH (188 aa)) is the Glutamine amidotransferase type-1 domain. Cys-295 functions as the Nucleophile in the catalytic mechanism. Residues His-379 and Glu-381 contribute to the active site.

The protein belongs to the CarA family. Heterodimer composed of 2 chains; the small (or glutamine) chain promotes the hydrolysis of glutamine to ammonia, which is used by the large (or ammonia) chain to synthesize carbamoyl phosphate.

It localises to the mitochondrion matrix. The enzyme catalyses hydrogencarbonate + L-glutamine + 2 ATP + H2O = carbamoyl phosphate + L-glutamate + 2 ADP + phosphate + 2 H(+). It carries out the reaction L-glutamine + H2O = L-glutamate + NH4(+). It functions in the pathway amino-acid biosynthesis; L-arginine biosynthesis; carbamoyl phosphate from bicarbonate: step 1/1. Functionally, small subunit of the arginine-specific carbamoyl phosphate synthase (CPSase). CPSase catalyzes the formation of carbamoyl phosphate from the ammonia moiety of glutamine, carbonate, and phosphate donated by ATP, the first step of the arginine biosynthetic pathway. The small subunit (glutamine amidotransferase) binds and cleaves glutamine to supply the large subunit with the substrate ammonia. This Aspergillus niger (strain ATCC MYA-4892 / CBS 513.88 / FGSC A1513) protein is Carbamoyl phosphate synthase arginine-specific small chain (cpa1).